Here is a 149-residue protein sequence, read N- to C-terminus: D-aminoacyl-tRNA deacylase (149 aa).

Positions glycine 137–proline 138 match the Gly-cisPro motif, important for rejection of L-amino acids motif.

This sequence belongs to the DTD family. In terms of assembly, homodimer.

It is found in the cytoplasm. The catalysed reaction is glycyl-tRNA(Ala) + H2O = tRNA(Ala) + glycine + H(+). The enzyme catalyses a D-aminoacyl-tRNA + H2O = a tRNA + a D-alpha-amino acid + H(+). Its function is as follows. An aminoacyl-tRNA editing enzyme that deacylates mischarged D-aminoacyl-tRNAs. Also deacylates mischarged glycyl-tRNA(Ala), protecting cells against glycine mischarging by AlaRS. Acts via tRNA-based rather than protein-based catalysis; rejects L-amino acids rather than detecting D-amino acids in the active site. By recycling D-aminoacyl-tRNA to D-amino acids and free tRNA molecules, this enzyme counteracts the toxicity associated with the formation of D-aminoacyl-tRNA entities in vivo and helps enforce protein L-homochirality. The protein is D-aminoacyl-tRNA deacylase of Clostridium botulinum (strain ATCC 19397 / Type A).